Reading from the N-terminus, the 211-residue chain is Uracil phosphoribosyltransferase (211 aa).

Residue 30–34 (KGLVR) participates in GTP binding. 5-phospho-alpha-D-ribose 1-diphosphate is bound by residues arginine 79, arginine 104, and 133 to 141 (DPMLATGIT). Uracil is bound by residues isoleucine 197 and 202-204 (GDA). 5-phospho-alpha-D-ribose 1-diphosphate is bound at residue aspartate 203.

It belongs to the UPRTase family. Mg(2+) serves as cofactor.

The enzyme catalyses UMP + diphosphate = 5-phospho-alpha-D-ribose 1-diphosphate + uracil. Its pathway is pyrimidine metabolism; UMP biosynthesis via salvage pathway; UMP from uracil: step 1/1. Allosterically activated by GTP. In terms of biological role, catalyzes the conversion of uracil and 5-phospho-alpha-D-ribose 1-diphosphate (PRPP) to UMP and diphosphate. This is Uracil phosphoribosyltransferase from Pyrobaculum islandicum (strain DSM 4184 / JCM 9189 / GEO3).